Consider the following 78-residue polypeptide: Sec-independent protein translocase protein TatA (78 aa).

Residues Met-1–Gly-21 traverse the membrane as a helical segment. The disordered stretch occupies residues Leu-43–Val-78. A compositionally biased stretch (pro residues) spans Ala-54–Leu-63.

Belongs to the TatA/E family. The Tat system comprises two distinct complexes: a TatABC complex, containing multiple copies of TatA, TatB and TatC subunits, and a separate TatA complex, containing only TatA subunits. Substrates initially bind to the TatABC complex, which probably triggers association of the separate TatA complex to form the active translocon.

It localises to the cell inner membrane. Functionally, part of the twin-arginine translocation (Tat) system that transports large folded proteins containing a characteristic twin-arginine motif in their signal peptide across membranes. TatA could form the protein-conducting channel of the Tat system. The polypeptide is Sec-independent protein translocase protein TatA (Xanthobacter autotrophicus (strain ATCC BAA-1158 / Py2)).